Here is a 554-residue protein sequence, read N- to C-terminus: MPEPFNSTMPLPSPPNAQPKDEKVGLQDSNQPPEMSASSEKKHPENENRQSQQNLRPTESENNEPYSVHSSSAKKLMVLAASLAGFFSPLSASIYYPALPAIEKALNVSSTQVNLTVTTYLILQGLAPMVTASFSDSAGRRPGYAICFIVYLAANLGLALQNSYAALMVLRALQSAGSSGAIAIANGVVSDIITPQERGSYIAFASVGSILGPSLSPIIGGLFAEYTDWHWIFWFLLIFSGAFCVPFFLFFPETCRKIVGNGKGVPPFWNRNLPDILRARKEKQRQQRAENEEENANRQRSRLSIPNPLKVFVVFTNLQTVMTLCPAGVAFGSYYAVLTGASGEFTRVYHFSEIKVALIFLPMGVGGLISALSTGKLVNWNFHRHARKRGIMVARNRRQELLNFPIERARLEIALPVFCLGCVCTVLYGWLMTQDVNVSGPIILLFVMSWSFAAFYQVLNVLLVDTYPGRGAMVTAVVNLLRCEIGAGMAAMISPLTSATGSGWSYTIIALIGVAATSPLLLTMKYGMKWRQESAAKAEEKKSRMQEAQQRQEV.

2 stretches are compositionally biased toward polar residues: residues 1 to 10 (MPEPFNSTMP) and 27 to 38 (QDSNQPPEMSAS). The interval 1 to 68 (MPEPFNSTMP…ESENNEPYSV (68 aa)) is disordered. N-linked (GlcNAc...) asparagine glycosylation is present at Asn6. Basic and acidic residues predominate over residues 39–48 (SEKKHPENEN). A helical membrane pass occupies residues 76-96 (LMVLAASLAGFFSPLSASIYY). 2 N-linked (GlcNAc...) asparagine glycosylation sites follow: Asn107 and Asn114. Helical transmembrane passes span 115–135 (LTVT…ASFS), 142–162 (PGYA…ALQN), 173–193 (LQSA…SDII), 202–222 (IAFA…IGGL), and 231–251 (WIFW…FLFF). Positions 281–300 (KEKQRQQRAENEEENANRQR) are disordered. Transmembrane regions (helical) follow at residues 311–331 (VFVV…GVAF), 354–374 (IKVA…ALST), and 413–433 (IALP…WLMT). Residue Asn437 is glycosylated (N-linked (GlcNAc...) asparagine). Transmembrane regions (helical) follow at residues 442-462 (IILL…LNVL), 473-493 (MVTA…AAMI), and 504-524 (WSYT…LLTM).

It belongs to the major facilitator superfamily.

The protein resides in the membrane. MFS-type transporter; part of the gene cluster that mediates the biosynthesis of the antihypercholesterolemic agents phomoidrides which are dimeric anhydrides. This is MFS-type transporter tstD from Talaromyces stipitatus (strain ATCC 10500 / CBS 375.48 / QM 6759 / NRRL 1006) (Penicillium stipitatum).